Here is a 109-residue protein sequence, read N- to C-terminus: Nucleoid-associated protein Ping_2276 (109 aa).

This sequence belongs to the YbaB/EbfC family. In terms of assembly, homodimer.

It is found in the cytoplasm. Its subcellular location is the nucleoid. Binds to DNA and alters its conformation. May be involved in regulation of gene expression, nucleoid organization and DNA protection. The polypeptide is Nucleoid-associated protein Ping_2276 (Psychromonas ingrahamii (strain DSM 17664 / CCUG 51855 / 37)).